Here is a 132-residue protein sequence, read N- to C-terminus: Small ribosomal subunit protein uS9 (132 aa).

Belongs to the universal ribosomal protein uS9 family.

This chain is Small ribosomal subunit protein uS9, found in Blochmanniella pennsylvanica (strain BPEN).